The following is a 1960-amino-acid chain: Intraflagellar transport protein 172 (1960 aa).

WD repeat units lie at residues 63–103 and 328–367; these read SNKD…TDKK and GFLP…YRYC. TPR repeat units lie at residues 1064–1098, 1362–1395, and 1397–1428; these read KADQ…QSYR, CDLF…QEIV, and MYLD…RSIR.

Belongs to the IFT172 family.

It is found in the cell projection. Its subcellular location is the cilium. It localises to the flagellum. The protein resides in the cytoplasm. The protein localises to the cytoskeleton. It is found in the flagellum axoneme. Its subcellular location is the flagellum basal body. In terms of biological role, component of the intraflagellar transport complex B (IFT-B) involved in flagellar assembly. This is Intraflagellar transport protein 172 from Giardia intestinalis (strain ATCC 50803 / WB clone C6) (Giardia lamblia).